Here is a 311-residue protein sequence, read N- to C-terminus: Oxidoreductase NAD-binding domain-containing protein 1 (311 aa).

The first 17 residues, 1 to 17 (MACAAVMIPGLLRCSVG), serve as a signal peptide directing secretion. One can recognise an FAD-binding FR-type domain in the interval 50–186 (HMERTASVLR…GGVGINPLLS (137 aa)). 178-183 (GVGINP) is a binding site for NAD(+).

The sequence is that of Oxidoreductase NAD-binding domain-containing protein 1 (OXNAD1) from Pongo abelii (Sumatran orangutan).